The chain runs to 334 residues: Ornithine carbamoyltransferase (334 aa).

Residues 56–59 (STRT), Gln-83, Arg-107, and 134–137 (HPTQ) each bind carbamoyl phosphate. L-ornithine is bound by residues Asn-168, Asp-232, and 236–237 (SM). Carbamoyl phosphate contacts are provided by residues 274 to 275 (CL) and Arg-320.

It belongs to the aspartate/ornithine carbamoyltransferase superfamily. OTCase family.

It localises to the cytoplasm. The enzyme catalyses carbamoyl phosphate + L-ornithine = L-citrulline + phosphate + H(+). It functions in the pathway amino-acid biosynthesis; L-arginine biosynthesis; L-arginine from L-ornithine and carbamoyl phosphate: step 1/3. Reversibly catalyzes the transfer of the carbamoyl group from carbamoyl phosphate (CP) to the N(epsilon) atom of ornithine (ORN) to produce L-citrulline. This chain is Ornithine carbamoyltransferase, found in Shigella sonnei (strain Ss046).